The chain runs to 94 residues: Putative pterin-4-alpha-carbinolamine dehydratase (94 aa).

The protein belongs to the pterin-4-alpha-carbinolamine dehydratase family.

It catalyses the reaction (4aS,6R)-4a-hydroxy-L-erythro-5,6,7,8-tetrahydrobiopterin = (6R)-L-erythro-6,7-dihydrobiopterin + H2O. In Caulobacter vibrioides (strain ATCC 19089 / CIP 103742 / CB 15) (Caulobacter crescentus), this protein is Putative pterin-4-alpha-carbinolamine dehydratase.